The sequence spans 375 residues: PTS system fructose-specific EIIC component (375 aa).

A PTS EIIC type-2 domain is found at 16–370 (VKEDLMTGVS…KPNFDAKMAA (355 aa)). Transmembrane regions (helical) follow at residues 24–44 (VSFMIPFVTIGGIFLALGYAV), 68–88 (IGVAGLTLMVPVLGAYIAYAI), 93–113 (GLAPGFILSYIIQQGNVLQAA), 122–142 (GSAGAGYLGAIVAGFLAGIVA), 160–180 (VLLIPVATTAVLTPVMLFVLG), 203–223 (AILLGGILGAMMAADMGGPIN), 238–258 (VTAPMAAVMIAGMVPPIGLAL), 279–299 (VLLGFSFITEGAIPYAAADPA), 301–321 (VIPSVVAGSAVAGAASMALGV), and 340–360 (FMFIACILLGSIVTAVIATAI).

The protein resides in the cell membrane. The phosphoenolpyruvate-dependent sugar phosphotransferase system (sugar PTS), a major carbohydrate active transport system, catalyzes the phosphorylation of incoming sugar substrates concomitantly with their translocation across the cell membrane. The enzyme II PtfABC PTS system is involved in fructose transport. This chain is PTS system fructose-specific EIIC component, found in Haloferax volcanii (strain ATCC 29605 / DSM 3757 / JCM 8879 / NBRC 14742 / NCIMB 2012 / VKM B-1768 / DS2) (Halobacterium volcanii).